We begin with the raw amino-acid sequence, 172 residues long: Neuropeptide-like protein nlp-8 (172 aa).

The signal sequence occupies residues 1 to 26; that stretch reads MSQKLLPISPLQLLFLQCLLIGFTAA.

In terms of processing, may be processed by convertase egl-3.

It localises to the secreted. Its function is as follows. Neuropeptide-like protein. Plays a role in behaviors associated with a sleep-like state induced by stress (SIS), acting in concert with the FARP (FMRFamide related) peptides, flp-13 and flp-24. In Caenorhabditis elegans, this protein is Neuropeptide-like protein nlp-8.